The sequence spans 311 residues: Probable manganese-dependent inorganic pyrophosphatase (311 aa).

Mn(2+)-binding residues include histidine 9, aspartate 13, aspartate 15, aspartate 77, histidine 99, and aspartate 151.

Belongs to the PPase class C family. Requires Mn(2+) as cofactor.

The protein localises to the cytoplasm. The catalysed reaction is diphosphate + H2O = 2 phosphate + H(+). The protein is Probable manganese-dependent inorganic pyrophosphatase of Streptococcus agalactiae serotype III (strain NEM316).